The chain runs to 193 residues: Ectoine TRAP transporter small permease protein TeaB (193 aa).

The next 4 helical transmembrane spans lie at 33 to 55, 65 to 82, 103 to 125, and 145 to 167; these read ILAL…RFAL, VNRI…GYAA, RALM…YYSV, and IFII…LFTA.

The protein belongs to the TRAP transporter small permease family. As to quaternary structure, the complex comprises the extracytoplasmic solute receptor protein TeaA, and the two transmembrane proteins TeaB and TeaC.

It is found in the cell inner membrane. Its function is as follows. Part of the tripartite ATP-independent periplasmic (TRAP) transport system TeaABC involved in the uptake of ectoine and hydroxyectoine in response to osmotic upshock. Probably functions as a recovery system for synthesized ectoine that leaks out of the cell. The sequence is that of Ectoine TRAP transporter small permease protein TeaB (teaB) from Halomonas elongata (strain ATCC 33173 / DSM 2581 / NBRC 15536 / NCIMB 2198 / 1H9).